A 215-amino-acid polypeptide reads, in one-letter code: CASP-like protein 1E1 (215 aa).

Residues 1-51 (MESSRGKPGLNGSGGGAAAFDYSSRRGYYTGAGAALPPLAAGSRAPPVDPC) lie on the Cytoplasmic side of the membrane. A helical transmembrane segment spans residues 52–72 (CVALRVFVLLGTLASAVVMAA). Residues 73 to 103 (DRQSTTVQIAAGEQLAPPLRVPVTAKWTYSS) lie on the Extracellular side of the membrane. A helical transmembrane segment spans residues 104–124 (AFVYFVVANAMVFAFSAAALA). Residues 125–130 (AVRRRS) are Cytoplasmic-facing. Residues 131–151 (AVVPVMVGDLVAMALLFSAVG) traverse the membrane as a helical segment. At 152–185 (AAAQFGLLGERGNAHVRWAKVCDVYGPFCERAMA) the chain is on the extracellular side. The helical transmembrane segment at 186 to 206 (AVVVALIAAFADLVLLMLTIL) threads the bilayer. The Cytoplasmic segment spans residues 207 to 215 (TIHKASSYY).

The protein belongs to the Casparian strip membrane proteins (CASP) family. As to quaternary structure, homodimer and heterodimers.

It localises to the cell membrane. The sequence is that of CASP-like protein 1E1 from Oryza sativa subsp. indica (Rice).